The sequence spans 1172 residues: WD repeat-containing protein 48 homolog (1172 aa).

The tract at residues 1–115 is disordered; the sequence is MYEYYSTGKI…HSYGGGGGGT (115 aa). A compositionally biased stretch (polar residues) spans 13 to 36; sequence LPQQVDSNGINSKPMNSSPSTPIP. The segment covering 37 to 63 has biased composition (low complexity); the sequence is NNNNNNNNNNNNNNNNNNNNNNNNNNN. A compositionally biased stretch (polar residues) spans 64–89; that stretch reads RNKSQQSFYLNNNNRNCGFSSPTKPQ. A compositionally biased stretch (low complexity) spans 90-107; the sequence is YNNNNNNNNNNNSNYNHS. WD repeat units follow at residues 152–202, 208–246, 249–548, 560–599, 602–641, 645–683, and 686–727; these read RHCF…GFKF, DHTD…CVNS, FHDD…SPMF, GEGI…KIFK, GHTD…CIQV, LHTD…QSRL, and RENE…NQSI. Over residues 341 to 365 the composition is skewed to low complexity; the sequence is ISTNNNNNNSSSSNNNNNNNNNNNN. The interval 341 to 544 is disordered; that stretch reads ISTNNNNNNS…NDNNNLNKKF (204 aa). Composition is skewed to polar residues over residues 366–377, 388–408, and 417–434; these read GQTNTHENTAET, QLSS…NFRN, and PPSS…SNGR. The segment covering 435-485 has biased composition (low complexity); that stretch reads NVNNRENNNNNNNNNNNNNNNNNNNNNNNNNNNNNNNNNINNNNHENNGNV. Over residues 486-503 the composition is skewed to acidic residues; that stretch reads DVDDEDDDDDDDDDDDDD. A compositionally biased stretch (basic and acidic residues) spans 504-513; the sequence is CNKNKKKYDD. The span at 514-543 shows a compositional bias: low complexity; sequence NNNNNNYNNNNNKKNNSNDNNNDNNNLNKK. A compositionally biased stretch (low complexity) spans 745 to 769; it reads NNNNNNNNNNNNNNNNNNNNNNNNN. Residues 745 to 775 are disordered; it reads NNNNNNNNNNNNNNNNNNNNNNNNNNREKLS. One copy of the WD 8 repeat lies at 794-833; sequence QGRAGIIKNQVLNNRRQVLTKDNDNNVQLWDITKGKEIES. Residues 926-986 form a disordered region; that stretch reads ELNHSNDSVN…TNSTTPNSGR (61 aa). Residues 930 to 984 show a composition bias toward low complexity; it reads SNDSVNSSLSSNTSGDNNNNNYNNYNNYNNNNNNGLQKSSSSSSIVSTNSTTPNS.

It belongs to the WD repeat WDR48 family.

This Dictyostelium discoideum (Social amoeba) protein is WD repeat-containing protein 48 homolog.